Here is a 167-residue protein sequence, read N- to C-terminus: Endoribonuclease YbeY (167 aa).

Histidine 132, histidine 136, and histidine 142 together coordinate Zn(2+).

It belongs to the endoribonuclease YbeY family. Requires Zn(2+) as cofactor.

Its subcellular location is the cytoplasm. Functionally, single strand-specific metallo-endoribonuclease involved in late-stage 70S ribosome quality control and in maturation of the 3' terminus of the 16S rRNA. The polypeptide is Endoribonuclease YbeY (Clostridium tetani (strain Massachusetts / E88)).